Here is a 250-residue protein sequence, read N- to C-terminus: Ribosomal RNA small subunit methyltransferase J (250 aa).

S-adenosyl-L-methionine contacts are provided by residues 96-97 and D168; that span reads RD.

The protein belongs to the methyltransferase superfamily. RsmJ family.

The protein resides in the cytoplasm. The catalysed reaction is guanosine(1516) in 16S rRNA + S-adenosyl-L-methionine = N(2)-methylguanosine(1516) in 16S rRNA + S-adenosyl-L-homocysteine + H(+). In terms of biological role, specifically methylates the guanosine in position 1516 of 16S rRNA. The sequence is that of Ribosomal RNA small subunit methyltransferase J from Neisseria meningitidis serogroup C / serotype 2a (strain ATCC 700532 / DSM 15464 / FAM18).